Consider the following 537-residue polypeptide: T-complex protein 1 subunit theta (537 aa).

It belongs to the TCP-1 chaperonin family. As to quaternary structure, heterooligomeric complex.

It is found in the cytoplasm. Functionally, molecular chaperone; assists the folding of proteins upon ATP hydrolysis. Known to play a role, in vitro, in the folding of actin and tubulin. This Dictyostelium discoideum (Social amoeba) protein is T-complex protein 1 subunit theta (cct8).